The following is a 254-amino-acid chain: MKKLTKISTALLIAGLGFSFAASAKVTVFAAASMTDALQQVAKDYAKQNPKNEVVFSFASSSTLAKQVEEGAPADIFVSASNKWMKYLSEKDLTVKETEKVLVGNDLVLIAPAKSAVNSVDIAKGEWINALKDSYLSVGDPAHVPAGQYAEEALTKLNLWDKVKDRLARGKDVRGALALVERAEAPYGIVYSTDAKVSQQVKTVAVFPADSHKPVVYPVSIVKGHDNADSRDFLKYLESDAAKKVLVGYGFSAK.

A signal peptide spans M1 to A24. Positions 33, 61, 146, 173, and 191 each coordinate molybdate.

Belongs to the bacterial solute-binding protein ModA family. The complex is composed of two ATP-binding proteins (ModC), two transmembrane proteins (ModB) and a solute-binding protein (ModA).

The protein localises to the periplasm. Its function is as follows. Involved in the transport of molybdenum into the cell. This Haemophilus influenzae (strain ATCC 51907 / DSM 11121 / KW20 / Rd) protein is Molybdate-binding protein ModA (modA).